The chain runs to 355 residues: GTPase Obg (355 aa).

Positions 1 to 159 constitute an Obg domain; the sequence is MKLVDEAEIL…RLLKLELKLL (159 aa). In terms of domain architecture, OBG-type G spans 160–342; the sequence is ADVGLLGFPN…IMKDVMAFFD (183 aa). GTP is bound by residues 166 to 173, 191 to 195, 213 to 216, 292 to 295, and 323 to 325; these read GFPNAGKS, FTTLY, DVPG, NKAD, and SAL. Positions 173 and 193 each coordinate Mg(2+).

This sequence belongs to the TRAFAC class OBG-HflX-like GTPase superfamily. OBG GTPase family. As to quaternary structure, monomer. Mg(2+) serves as cofactor.

It is found in the cytoplasm. Its function is as follows. An essential GTPase which binds GTP, GDP and possibly (p)ppGpp with moderate affinity, with high nucleotide exchange rates and a fairly low GTP hydrolysis rate. Plays a role in control of the cell cycle, stress response, ribosome biogenesis and in those bacteria that undergo differentiation, in morphogenesis control. The sequence is that of GTPase Obg from Xanthomonas axonopodis pv. citri (strain 306).